We begin with the raw amino-acid sequence, 168 residues long: Photosystem I assembly protein Ycf3 (168 aa).

3 TPR repeats span residues 35 to 68, 72 to 105, and 120 to 153; these read AFTY…EIDP, SYIL…NPFL, and GEQA…TPGN.

It belongs to the Ycf3 family.

Its subcellular location is the plastid. The protein localises to the chloroplast thylakoid membrane. Its function is as follows. Essential for the assembly of the photosystem I (PSI) complex. May act as a chaperone-like factor to guide the assembly of the PSI subunits. The polypeptide is Photosystem I assembly protein Ycf3 (Solanum bulbocastanum (Wild potato)).